A 246-amino-acid chain; its full sequence is Exosome complex component Rrp41 (246 aa).

The protein belongs to the RNase PH family. Rrp41 subfamily. In terms of assembly, component of the archaeal exosome complex. Forms a hexameric ring-like arrangement composed of 3 Rrp41-Rrp42 heterodimers. The hexameric ring associates with a trimer of Rrp4 and/or Csl4 subunits.

The protein resides in the cytoplasm. Its function is as follows. Catalytic component of the exosome, which is a complex involved in RNA degradation. Has 3'-&gt;5' exoribonuclease activity. Can also synthesize heteromeric RNA-tails. This chain is Exosome complex component Rrp41, found in Pyrobaculum neutrophilum (strain DSM 2338 / JCM 9278 / NBRC 100436 / V24Sta) (Thermoproteus neutrophilus).